Here is a 218-residue protein sequence, read N- to C-terminus: ATP synthase subunit a (218 aa).

The next 5 helical transmembrane spans lie at 17–37 (IYSTVVNTWIIMILLLAGIFL), 75–95 (YLPLVATLFIFILSLNLSWFI), 104–124 (DLSTTAAFAVTTIILVQIFGI), 162–184 (LFGNLFGEEMVVTILFLMIPFLL), and 196–216 (GTIQAFVFTLLTITYIANFVH).

The protein belongs to the ATPase A chain family. As to quaternary structure, F-type ATPases have 2 components, CF(1) - the catalytic core - and CF(0) - the membrane proton channel. CF(1) has five subunits: alpha(3), beta(3), gamma(1), delta(1), epsilon(1). CF(0) has three main subunits: a(1), b(2) and c(9-12). The alpha and beta chains form an alternating ring which encloses part of the gamma chain. CF(1) is attached to CF(0) by a central stalk formed by the gamma and epsilon chains, while a peripheral stalk is formed by the delta and b chains. In this bacterium the a and b subunits are transcribed but do not seem to be translated, thus the ATP synthase consists of the alpha, beta, gamma, delta, epsilon and c subunits.

The protein localises to the cell membrane. Functionally, key component of the proton channel; it plays a direct role in the translocation of protons across the membrane. The protein is ATP synthase subunit a of Moorella thermoacetica (strain ATCC 39073 / JCM 9320).